The sequence spans 561 residues: Interleukin-1 receptor-like 2 (561 aa).

The first 21 residues, 1-21 (MGMPPLLFCWVSFVLPLFVAA), serve as a signal peptide directing secretion. Ig-like C2-type domains follow at residues 22 to 113 (GNCT…INLT), 128 to 215 (SINS…VRNY), and 225 to 321 (SGGR…TCHA). The Extracellular segment spans residues 22-338 (GNCTDVYMHH…ILKRPAPDFR (317 aa)). Asn-23, Asn-43, Asn-55, Asn-111, and Asn-130 each carry an N-linked (GlcNAc...) asparagine glycan. A disulfide bond links Cys-44 and Cys-97. Cys-149 and Cys-199 are oxidised to a cystine. Residues Asn-231, Asn-237, Asn-253, Asn-269, Asn-290, and Asn-302 are each glycosylated (N-linked (GlcNAc...) asparagine). Cys-252 and Cys-319 form a disulfide bridge. A helical transmembrane segment spans residues 339–358 (AYLIGGLMAFLLLAVSILYI). Residues 359-561 (YNTFKVDIVL…LLGHTPRIPG (203 aa)) are Cytoplasmic-facing. In terms of domain architecture, TIR spans 384-539 (KLYDAYVLYP…KFWKKVRYHM (156 aa)). Residue Glu-470 is part of the active site.

Belongs to the interleukin-1 receptor family. Interacts with IL1RAP; the association is enhanced by IL36B indicative for an functional signaling complex and inhibited by IL36RN. As to expression, predominant expression in the lung and epididymis, with lower expression in cerebral cortex and testis. Expression in the brain is non-neuronal and associated with the cerebral vasculature. Not detected in any cell line tested.

It localises to the membrane. It catalyses the reaction NAD(+) + H2O = ADP-D-ribose + nicotinamide + H(+). In terms of biological role, receptor for interleukin-36 (IL36A, IL36B and IL36G). After binding to interleukin-36 associates with the coreceptor IL1RAP to form the interleukin-36 receptor complex which mediates interleukin-36-dependent activation of NF-kappa-B, MAPK and other pathways. The IL-36 signaling system is thought to be present in epithelial barriers and to take part in local inflammatory response; it is similar to the IL-1 system. Seems to be involved in skin inflammatory response by induction of the IL-23/IL-17/IL-22 pathway. Receptor for the interleukin IL36G. Binding to the agonist leads to the activation of NF-kappa-B. This Rattus norvegicus (Rat) protein is Interleukin-1 receptor-like 2 (Il1rl2).